Here is a 341-residue protein sequence, read N- to C-terminus: tRNA N6-adenosine threonylcarbamoyltransferase (341 aa).

The Fe cation site is built by His115 and His119. Substrate contacts are provided by residues 137-141 (IVSGG), Asp170, Gly183, Asp187, and Asn276. Position 304 (Asp304) interacts with Fe cation.

It belongs to the KAE1 / TsaD family. Requires Fe(2+) as cofactor.

Its subcellular location is the cytoplasm. It carries out the reaction L-threonylcarbamoyladenylate + adenosine(37) in tRNA = N(6)-L-threonylcarbamoyladenosine(37) in tRNA + AMP + H(+). Its function is as follows. Required for the formation of a threonylcarbamoyl group on adenosine at position 37 (t(6)A37) in tRNAs that read codons beginning with adenine. Is involved in the transfer of the threonylcarbamoyl moiety of threonylcarbamoyl-AMP (TC-AMP) to the N6 group of A37, together with TsaE and TsaB. TsaD likely plays a direct catalytic role in this reaction. This Staphylococcus aureus (strain USA300) protein is tRNA N6-adenosine threonylcarbamoyltransferase.